Consider the following 312-residue polypeptide: Bifunctional pinoresinol-lariciresinol reductase (312 aa).

NADP(+)-binding positions include G10–G16, R35, and K44. K139 functions as the Proton acceptor in the catalytic mechanism. Position 143 (R143) interacts with NADP(+). Position 271 (H271) interacts with substrate.

Belongs to the NmrA-type oxidoreductase family. Isoflavone reductase subfamily. Dimer. In terms of tissue distribution, expressed in young stems, young roots and petioles. In stems, expressed in radial parenchyma cells and in the cambial cells of developing secondary xylem.

It carries out the reaction (+)-lariciresinol + NADP(+) = (+)-pinoresinol + NADPH + H(+). The enzyme catalyses (-)-secoisolariciresinol + NADP(+) = (+)-lariciresinol + NADPH + H(+). Functionally, reductase involved in lignan biosynthesis. Catalyzes the enantioselective sequential conversion of (+)-pinoresinol into (+)-lariciresinol and of (+)-lariciresinol into (-)-secoisolariciresinol. Abstracts the 4R-hydride from the NADPH cofactor during catalysis. This Forsythia intermedia (Border forsythia) protein is Bifunctional pinoresinol-lariciresinol reductase (PLR_Fi1).